The primary structure comprises 148 residues: Deoxyuridine 5'-triphosphate nucleotidohydrolase (148 aa).

Substrate contacts are provided by residues 68–70, asparagine 81, 85–87, and lysine 95; these read RSG and TID.

The protein belongs to the dUTPase family. The cofactor is Mg(2+).

It carries out the reaction dUTP + H2O = dUMP + diphosphate + H(+). It functions in the pathway pyrimidine metabolism; dUMP biosynthesis; dUMP from dCTP (dUTP route): step 2/2. Functionally, this enzyme is involved in nucleotide metabolism: it produces dUMP, the immediate precursor of thymidine nucleotides and it decreases the intracellular concentration of dUTP so that uracil cannot be incorporated into DNA. This chain is Deoxyuridine 5'-triphosphate nucleotidohydrolase, found in Rickettsia massiliae (strain Mtu5).